Reading from the N-terminus, the 478-residue chain is Protein nucleotidyltransferase YdiU (478 aa).

Residues glycine 84, glycine 86, arginine 87, lysine 107, aspartate 119, glycine 120, arginine 170, and arginine 177 each contribute to the ATP site. The active-site Proton acceptor is aspartate 246. Mg(2+) is bound by residues asparagine 247 and aspartate 256. Position 256 (aspartate 256) interacts with ATP.

The protein belongs to the SELO family. It depends on Mg(2+) as a cofactor. Mn(2+) serves as cofactor.

It carries out the reaction L-seryl-[protein] + ATP = 3-O-(5'-adenylyl)-L-seryl-[protein] + diphosphate. The catalysed reaction is L-threonyl-[protein] + ATP = 3-O-(5'-adenylyl)-L-threonyl-[protein] + diphosphate. It catalyses the reaction L-tyrosyl-[protein] + ATP = O-(5'-adenylyl)-L-tyrosyl-[protein] + diphosphate. The enzyme catalyses L-histidyl-[protein] + UTP = N(tele)-(5'-uridylyl)-L-histidyl-[protein] + diphosphate. It carries out the reaction L-seryl-[protein] + UTP = O-(5'-uridylyl)-L-seryl-[protein] + diphosphate. The catalysed reaction is L-tyrosyl-[protein] + UTP = O-(5'-uridylyl)-L-tyrosyl-[protein] + diphosphate. In terms of biological role, nucleotidyltransferase involved in the post-translational modification of proteins. It can catalyze the addition of adenosine monophosphate (AMP) or uridine monophosphate (UMP) to a protein, resulting in modifications known as AMPylation and UMPylation. The protein is Protein nucleotidyltransferase YdiU of Escherichia coli O6:K15:H31 (strain 536 / UPEC).